Here is a 317-residue protein sequence, read N- to C-terminus: Beta-sarcoglycan (317 aa).

A disordered region spans residues 1–31; it reads MAAAAAATEQQSSNGPVKKSMREKAVERRNV. Residues 1–64 are Cytoplasmic-facing; it reads MAAAAAATEQ…GLRGRKGNLA (64 aa). Residues 20–31 show a composition bias toward basic and acidic residues; it reads SMREKAVERRNV. Residues 65 to 85 traverse the membrane as a helical; Signal-anchor for type II membrane protein segment; the sequence is ICVIVLLFILAVINLIITLVI. Residues 86–317 are Extracellular-facing; it reads WAVIRIGPNG…TSDNPCGDLY (232 aa). Asparagine 157, asparagine 210, and asparagine 257 each carry an N-linked (GlcNAc...) asparagine glycan. 2 cysteine pairs are disulfide-bonded: cysteine 287–cysteine 313 and cysteine 289–cysteine 306.

It belongs to the sarcoglycan beta/delta/gamma/zeta family. Cross-link to form 2 major subcomplexes: one consisting of SGCB, SGCD and SGCG and the other consisting of SGCB and SGCD. The association between SGCB and SGCG is particularly strong while SGCA is loosely associated with the other sarcoglycans. Disulfide bonds are present.

The protein resides in the cell membrane. It localises to the sarcolemma. The protein localises to the cytoplasm. It is found in the cytoskeleton. Functionally, component of the sarcoglycan complex, a subcomplex of the dystrophin-glycoprotein complex which forms a link between the F-actin cytoskeleton and the extracellular matrix. The protein is Beta-sarcoglycan (SGCB) of Bos taurus (Bovine).